Reading from the N-terminus, the 330-residue chain is Putative UV-damage endonuclease (330 aa).

Belongs to the uve1/UvsE family.

The protein localises to the virion. Endonuclease for the repair of UV-irradiated DNA. This is Putative UV-damage endonuclease from Acanthamoeba polyphaga mimivirus (APMV).